The sequence spans 56 residues: Ovomucoid (56 aa).

The Kazal-like domain occupies 6–56 (VDCSDHPKPACLQEQKPICGSDNKTYDNKCSFCNAVVDSNGTLTLSHFGKC). Cystine bridges form between cysteine 8–cysteine 38, cysteine 16–cysteine 35, and cysteine 24–cysteine 56. Asparagine 45 carries an N-linked (GlcNAc...) asparagine glycan.

The protein localises to the secreted. The chain is Ovomucoid from Ortalis vetula (Plain chachalaca).